Reading from the N-terminus, the 403-residue chain is Homoserine O-succinyltransferase (403 aa).

The region spanning 58 to 366 (NAVLICHALS…ESNHGHDAFL (309 aa)) is the AB hydrolase-1 domain. Catalysis depends on serine 164, which acts as the Nucleophile. Arginine 234 is a binding site for substrate. Residues aspartate 329 and histidine 362 contribute to the active site. A substrate-binding site is contributed by aspartate 363.

Belongs to the AB hydrolase superfamily. MetX family. In terms of assembly, homodimer.

It is found in the cytoplasm. It carries out the reaction L-homoserine + succinyl-CoA = O-succinyl-L-homoserine + CoA. It participates in amino-acid biosynthesis; L-methionine biosynthesis via de novo pathway; O-succinyl-L-homoserine from L-homoserine: step 1/1. In terms of biological role, transfers a succinyl group from succinyl-CoA to L-homoserine, forming succinyl-L-homoserine. The chain is Homoserine O-succinyltransferase from Halothiobacillus neapolitanus (strain ATCC 23641 / c2) (Thiobacillus neapolitanus).